The following is a 244-amino-acid chain: Ribonuclease P protein component 3 (244 aa).

It belongs to the eukaryotic/archaeal RNase P protein component 3 family. As to quaternary structure, consists of a catalytic RNA component and at least 4-5 protein subunits.

Its subcellular location is the cytoplasm. The enzyme catalyses Endonucleolytic cleavage of RNA, removing 5'-extranucleotides from tRNA precursor.. In terms of biological role, part of ribonuclease P, a protein complex that generates mature tRNA molecules by cleaving their 5'-ends. This chain is Ribonuclease P protein component 3, found in Methanopyrus kandleri (strain AV19 / DSM 6324 / JCM 9639 / NBRC 100938).